The primary structure comprises 156 residues: RNA polymerase sigma factor SigS (156 aa).

The Polymerase core binding motif lies at 29 to 44 (EYYQLLLIKMWQLSQI). The segment at residues 126 to 145 (QYEIADIMSLSTSTIKLIKA) is a DNA-binding region (H-T-H motif).

It belongs to the sigma-70 factor family.

Functionally, sigma factors are initiation factors that promote the attachment of RNA polymerase to specific initiation sites and are then released. Sigma-S contributes to the protection against external stress, thus playing a role in cellular fitness and survival. This is RNA polymerase sigma factor SigS (sigS) from Staphylococcus aureus (strain MRSA252).